A 156-amino-acid chain; its full sequence is Putative pre-16S rRNA nuclease (156 aa).

It belongs to the YqgF nuclease family.

The protein localises to the cytoplasm. In terms of biological role, could be a nuclease involved in processing of the 5'-end of pre-16S rRNA. The protein is Putative pre-16S rRNA nuclease of Albidiferax ferrireducens (strain ATCC BAA-621 / DSM 15236 / T118) (Rhodoferax ferrireducens).